We begin with the raw amino-acid sequence, 151 residues long: Large ribosomal subunit protein uL15 (151 aa).

Belongs to the universal ribosomal protein uL15 family. Part of the 50S ribosomal subunit.

Its function is as follows. Binds to the 23S rRNA. The polypeptide is Large ribosomal subunit protein uL15 (Hyperthermus butylicus (strain DSM 5456 / JCM 9403 / PLM1-5)).